Consider the following 98-residue polypeptide: MSKVCEISGKRPIVANSIQRRGKAKREGGVGKKTTGISKRRQYPNLQKVRVRVAGQEITFRVAASHIPKVYELVERAKGLRLEGLSPKEIKKELLKLL.

It belongs to the bacterial ribosomal protein bL28 family.

In Thermus thermophilus (strain ATCC BAA-163 / DSM 7039 / HB27), this protein is Large ribosomal subunit protein bL28.